A 47-amino-acid chain; its full sequence is Defensin Tk-AMP-D1.1 (47 aa).

Intrachain disulfides connect C3-C47, C14-C34, C20-C41, and C24-C43.

In terms of biological role, plant defense peptide. The sequence is that of Defensin Tk-AMP-D1.1 from Triticum kiharae (Wheat).